Here is a 164-residue protein sequence, read N- to C-terminus: Protein eva-1 homolog B (164 aa).

Residues 29 to 49 (GLYFVLGVCFGLLLTLCLLVI) form a helical membrane-spanning segment. The tract at residues 56 to 110 (RSRPRTPAPRRDPRSSTLEPEDEDDEEDEDTMTRLGPDDTLQGQELSTEPDGPLS) is disordered. Acidic residues predominate over residues 74–85 (EPEDEDDEEDED). 3 positions are modified to phosphothreonine: Thr86, Thr149, and Thr157.

This sequence belongs to the EVA1 family.

The protein resides in the membrane. This Mus musculus (Mouse) protein is Protein eva-1 homolog B (Eva1b).